Consider the following 348-residue polypeptide: Phospho-2-dehydro-3-deoxyheptonate aldolase, Trp-sensitive (348 aa).

The protein belongs to the class-I DAHP synthase family.

It catalyses the reaction D-erythrose 4-phosphate + phosphoenolpyruvate + H2O = 7-phospho-2-dehydro-3-deoxy-D-arabino-heptonate + phosphate. It participates in metabolic intermediate biosynthesis; chorismate biosynthesis; chorismate from D-erythrose 4-phosphate and phosphoenolpyruvate: step 1/7. In terms of biological role, stereospecific condensation of phosphoenolpyruvate (PEP) and D-erythrose-4-phosphate (E4P) giving rise to 3-deoxy-D-arabino-heptulosonate-7-phosphate (DAHP). The sequence is that of Phospho-2-dehydro-3-deoxyheptonate aldolase, Trp-sensitive (aroH) from Escherichia coli O6:H1 (strain CFT073 / ATCC 700928 / UPEC).